Reading from the N-terminus, the 1774-residue chain is Protein TIC 214 (1774 aa).

Transmembrane regions (helical) follow at residues 19–39 (IINSVVVVGLYYGFLTTFSIG), 68–88 (FIAGQLMMFISIYYAPLHLAL), 91–111 (PHTITVLALPYLLFHFFWNNH), 133–153 (VFLNNLIFQLFNHFILPSSML), 176–196 (VGWLIGHILFMKWVGLVLVWI), and 227–247 (IFSILLFITCVYYLGRIPSPI). The span at 254 to 268 (GTSETEERGGTKQDQ) shows a compositional bias: basic and acidic residues. The tract at residues 254–275 (GTSETEERGGTKQDQEVSTEEA) is disordered.

Belongs to the TIC214 family. As to quaternary structure, part of the Tic complex.

It localises to the plastid. It is found in the chloroplast inner membrane. Its function is as follows. Involved in protein precursor import into chloroplasts. May be part of an intermediate translocation complex acting as a protein-conducting channel at the inner envelope. This chain is Protein TIC 214, found in Aethionema cordifolium (Lebanon stonecress).